Reading from the N-terminus, the 211-residue chain is Protein G12 (211 aa).

Residues 1 to 19 (MKIAAFVVACLVATSAVSC) form the signal peptide.

The chain is Protein G12 from Anopheles gambiae (African malaria mosquito).